The primary structure comprises 84 residues: NAD(P)H-quinone oxidoreductase subunit O (84 aa).

The protein belongs to the complex I NdhO subunit family. In terms of assembly, NDH-1 can be composed of about 15 different subunits; different subcomplexes with different compositions have been identified which probably have different functions.

It localises to the cellular thylakoid membrane. It catalyses the reaction a plastoquinone + NADH + (n+1) H(+)(in) = a plastoquinol + NAD(+) + n H(+)(out). The enzyme catalyses a plastoquinone + NADPH + (n+1) H(+)(in) = a plastoquinol + NADP(+) + n H(+)(out). Functionally, NDH-1 shuttles electrons from an unknown electron donor, via FMN and iron-sulfur (Fe-S) centers, to quinones in the respiratory and/or the photosynthetic chain. The immediate electron acceptor for the enzyme in this species is believed to be plastoquinone. Couples the redox reaction to proton translocation, and thus conserves the redox energy in a proton gradient. Cyanobacterial NDH-1 also plays a role in inorganic carbon-concentration. This chain is NAD(P)H-quinone oxidoreductase subunit O, found in Synechococcus sp. (strain CC9902).